We begin with the raw amino-acid sequence, 83 residues long: Alpha-toxin CvIV4 (83 aa).

The N-terminal stretch at 1–19 (MNYFILILVAALLILDVNC) is a signal peptide. Residues 21 to 79 (KDGYPVEHSGCKYTCWKNEYCDKVCKDLKGEGGYCYINLTCWCTGLPDNVPLKTNQRCN) enclose the LCN-type CS-alpha/beta domain. Cystine bridges form between cysteine 31-cysteine 78, cysteine 35-cysteine 55, cysteine 41-cysteine 61, and cysteine 45-cysteine 63.

This sequence belongs to the long (4 C-C) scorpion toxin superfamily. Sodium channel inhibitor family. Expressed by the venom gland.

It localises to the secreted. Its function is as follows. This toxin significantly slows the fast inactivation of Nav1.2/SCN2A (EC(50)=580 nM), Nav1.3/SCN3A (EC(50)=1310 nM), Nav1.4/SCN4A (EC(50)=530 nM), and Nav1.7/SCN9A (EC(50)=1340 nM). The toxin does not affect the peak amplitude of Nav1.7 currents. On all channels cited above, the toxin requires depolarizing potentials to slow channel inactivation. In addition, the toxin has no or very weak effects on the voltage-dependence of steady-state inactivation, and on voltage-dependence of activation. In vivo, it produces paw licking in mice equivalent to the effects of whole venom. The polypeptide is Alpha-toxin CvIV4 (Centruroides vittatus (Striped bark scorpion)).